We begin with the raw amino-acid sequence, 280 residues long: UPF0276 protein NGO_1946 (280 aa).

This sequence belongs to the UPF0276 family.

The protein is UPF0276 protein NGO_1946 of Neisseria gonorrhoeae (strain ATCC 700825 / FA 1090).